Consider the following 444-residue polypeptide: ATP-dependent protease ATPase subunit HslU (444 aa).

Residues I18, 60 to 65, D257, E322, and R394 each bind ATP; that span reads GVGKTE.

Belongs to the ClpX chaperone family. HslU subfamily. In terms of assembly, a double ring-shaped homohexamer of HslV is capped on each side by a ring-shaped HslU homohexamer. The assembly of the HslU/HslV complex is dependent on binding of ATP.

Its subcellular location is the cytoplasm. ATPase subunit of a proteasome-like degradation complex; this subunit has chaperone activity. The binding of ATP and its subsequent hydrolysis by HslU are essential for unfolding of protein substrates subsequently hydrolyzed by HslV. HslU recognizes the N-terminal part of its protein substrates and unfolds these before they are guided to HslV for hydrolysis. The chain is ATP-dependent protease ATPase subunit HslU from Psychromonas ingrahamii (strain DSM 17664 / CCUG 51855 / 37).